The chain runs to 426 residues: Serine hydroxymethyltransferase (426 aa).

Residues Leu115 and 119 to 121 each bind (6S)-5,6,7,8-tetrahydrofolate; that span reads GHI. Lys225 bears the N6-(pyridoxal phosphate)lysine mark.

Belongs to the SHMT family. As to quaternary structure, homodimer. It depends on pyridoxal 5'-phosphate as a cofactor.

It is found in the cytoplasm. Its pathway is amino-acid biosynthesis; glycine biosynthesis; glycine from L-serine: step 1/1. Catalyzes the reversible interconversion of serine and glycine with a modified folate serving as the one-carbon carrier. Also exhibits a pteridine-independent aldolase activity toward beta-hydroxyamino acids, producing glycine and aldehydes, via a retro-aldol mechanism. This is Serine hydroxymethyltransferase from Thermoplasma volcanium (strain ATCC 51530 / DSM 4299 / JCM 9571 / NBRC 15438 / GSS1).